The primary structure comprises 1030 residues: Carbamoyl phosphate synthase arginine-specific large chain (1030 aa).

The carboxyphosphate synthetic domain stretch occupies residues 1-401 (MPKDTSISSI…AIQKAAASLE (401 aa)). ATP contacts are provided by R129, R169, G175, G176, K208, I210, E215, G241, V242, H243, Q284, and E298. Residues 133-327 (RSLMNELKQP…IAKMAAKLAV (195 aa)) form the ATP-grasp 1 domain. Mg(2+)-binding residues include Q284, E298, and N300. Mn(2+) is bound by residues Q284, E298, and N300. Residues 402-548 (LKNIGTHLPE…YSTYFGETDG (147 aa)) form an oligomerization domain region. The tract at residues 549–928 (DISRKEKKRA…ALKKIYTRVW (380 aa)) is carbamoyl phosphate synthetic domain. Residues 675-863 (YQLLDELGLK…MIPLATRLLA (189 aa)) enclose the ATP-grasp 2 domain. ATP contacts are provided by R711, Q748, V750, E754, G779, V780, H781, S782, Q822, and E834. Q822, E834, and N836 together coordinate Mg(2+). Residues Q822, E834, and N836 each coordinate Mn(2+). An MGS-like domain is found at 925-1027 (TRVWSQKGSI…KDLYKKEVAS (103 aa)). The segment at 929–1030 (SQKGSIYLQN…YKKEVASCTQ (102 aa)) is allosteric domain.

This sequence belongs to the CarB family. Composed of two chains; the small (or glutamine) chain promotes the hydrolysis of glutamine to ammonia, which is used by the large (or ammonia) chain to synthesize carbamoyl phosphate. Tetramer of heterodimers (alpha,beta)4. The cofactor is Mg(2+). Mn(2+) is required as a cofactor.

The enzyme catalyses hydrogencarbonate + L-glutamine + 2 ATP + H2O = carbamoyl phosphate + L-glutamate + 2 ADP + phosphate + 2 H(+). It carries out the reaction hydrogencarbonate + NH4(+) + 2 ATP = carbamoyl phosphate + 2 ADP + phosphate + 2 H(+). Its pathway is amino-acid biosynthesis; L-arginine biosynthesis; carbamoyl phosphate from bicarbonate: step 1/1. Its function is as follows. Large subunit of the glutamine-dependent carbamoyl phosphate synthetase (CPSase). CPSase catalyzes the formation of carbamoyl phosphate from the ammonia moiety of glutamine, carbonate, and phosphate donated by ATP, constituting the first step of the biosynthetic pathway leading to arginine and/or urea. The large subunit (synthetase) binds the substrates ammonia (free or transferred from glutamine from the small subunit), hydrogencarbonate and ATP and carries out an ATP-coupled ligase reaction, activating hydrogencarbonate by forming carboxy phosphate which reacts with ammonia to form carbamoyl phosphate. The protein is Carbamoyl phosphate synthase arginine-specific large chain of Bacillus subtilis (strain 168).